The following is a 726-amino-acid chain: WD repeat-containing and planar cell polarity effector protein fritz homolog (726 aa).

2 WD repeats span residues 305-343 (LRSKAISCCKNSTEDKLIVGCEDSSVILYEAHRGVTLLA) and 344-383 (QAELMPSLISCHPSGAILLVGSNQGELQVFDIALSPINIQ). Over residues 642-660 (SSGSTPKHTIQQKIPNGPS) the composition is skewed to polar residues. The tract at residues 642–717 (SSGSTPKHTI…RRQDTEDVGS (76 aa)) is disordered. The segment covering 672–685 (MEETEEEEEEEEEA) has biased composition (acidic residues). The span at 701-712 (GELREDHRRQDT) shows a compositional bias: basic and acidic residues.

The protein belongs to the WD repeat fritz family. Component of the CPLANE (ciliogenesis and planar polarity effectors) complex, composed of INTU, FUZ and WDPCP. Interacts with CPLANE1.

Its subcellular location is the cell membrane. The protein resides in the cytoplasm. The protein localises to the cytoskeleton. It is found in the cilium axoneme. It localises to the cilium basal body. Its function is as follows. Probable effector of the planar cell polarity signaling pathway which regulates the septin cytoskeleton in both ciliogenesis and collective cell movements. Together with FUZ and WDPCP proposed to function as core component of the CPLANE (ciliogenesis and planar polarity effectors) complex involved in the recruitment of peripheral IFT-A proteins to basal bodies. Binds phosphatidylinositol 3-phosphate with highest affinity, followed by phosphatidylinositol 4-phosphate and phosphatidylinositol 5-phosphate. This Rattus norvegicus (Rat) protein is WD repeat-containing and planar cell polarity effector protein fritz homolog (Wdpcp).